Here is a 520-residue protein sequence, read N- to C-terminus: 3-phosphoshikimate 1-carboxyvinyltransferase, chloroplastic (520 aa).

Residues 1 to 76 (MAQVSRICNG…KVMSSVSTAE (76 aa)) constitute a chloroplast transit peptide. Positions 20 to 39 (LSKSSQRKSPLSVSLKTQQH) are disordered. Residues K99, S100, and R104 each coordinate 3-phosphoshikimate. K99 is a phosphoenolpyruvate binding site. The phosphoenolpyruvate site is built by G177 and R207. 6 residues coordinate 3-phosphoshikimate: S254, S255, Q256, S282, D407, and K434. Q256 provides a ligand contact to phosphoenolpyruvate. The active-site Proton acceptor is D407. Positions 438, 480, and 505 each coordinate phosphoenolpyruvate.

The protein belongs to the EPSP synthase family.

The protein resides in the plastid. It localises to the chloroplast. The enzyme catalyses 3-phosphoshikimate + phosphoenolpyruvate = 5-O-(1-carboxyvinyl)-3-phosphoshikimate + phosphate. The protein operates within metabolic intermediate biosynthesis; chorismate biosynthesis; chorismate from D-erythrose 4-phosphate and phosphoenolpyruvate: step 6/7. Functionally, catalyzes the transfer of the enolpyruvyl moiety of phosphoenolpyruvate (PEP) to the 5-hydroxyl of shikimate-3-phosphate (S3P) to produce enolpyruvyl shikimate-3-phosphate and inorganic phosphate. The sequence is that of 3-phosphoshikimate 1-carboxyvinyltransferase, chloroplastic from Arabidopsis thaliana (Mouse-ear cress).